Reading from the N-terminus, the 352-residue chain is Isopentenyl-diphosphate delta-isomerase (352 aa).

6 to 7 (RK) contributes to the substrate binding site. FMN is bound by residues 63–65 (AMT), S93, and N122. 93–95 (SQR) lines the substrate pocket. Position 160 (Q160) interacts with substrate. A Mg(2+)-binding site is contributed by E161. FMN is bound by residues K192, T221, 271–273 (GIR), and 292–293 (SQ).

The protein belongs to the IPP isomerase type 2 family. Homooctamer. Dimer of tetramers. The cofactor is FMN. NADPH serves as cofactor. Mg(2+) is required as a cofactor.

The protein localises to the cytoplasm. It carries out the reaction isopentenyl diphosphate = dimethylallyl diphosphate. Its function is as follows. Involved in the biosynthesis of isoprenoids. Catalyzes the 1,3-allylic rearrangement of the homoallylic substrate isopentenyl (IPP) to its allylic isomer, dimethylallyl diphosphate (DMAPP). This chain is Isopentenyl-diphosphate delta-isomerase, found in Pyrobaculum aerophilum (strain ATCC 51768 / DSM 7523 / JCM 9630 / CIP 104966 / NBRC 100827 / IM2).